A 340-amino-acid chain; its full sequence is Central glycolytic genes regulator (340 aa).

The segment at residues 37–56 (RRSLSASLGISERVLRGEVQ) is a DNA-binding region (H-T-H motif). Beta-D-fructose 1,6-bisphosphate is bound by residues 149–152 (GGTT), arginine 175, glutamine 185, 250–251 (RR), glutamate 269, and lysine 310.

It belongs to the SorC transcriptional regulatory family. As to quaternary structure, homotetramer. Binds primarily as a dimer to each half-site of the full-length operator, with much higher affinity for the right site. Then, both dimers interact, bridging the two-half sites of the operator region.

Its activity is regulated as follows. Stability and function are regulated by the effector molecule fructose-1,6-bisphosphate (FBP). In the presence of glucose, binding of FBP to the low-affinity sugar-binding site of CggR disrupts dimer/dimer bridging interactions and triggers a tetramer to dimer transition, which leaves two physically independent dimers on the target DNA and allows transcription of the downstream coding sequences by the RNA polymerase. In addition, FBP and several other phosphorylated compounds can bind to a high-affinity binding-site and protect CggR against aggregation and proteolysis. In the absence of glucose, represses the transcription of the gapA operon, which encodes five key glycolytic enzymes. Binds specifically to the cggR-gapA promoter region and blocks the progression of the RNA polymerase, leading to the arrest of the transcription. In Bacillus subtilis (strain 168), this protein is Central glycolytic genes regulator (cggR).